The sequence spans 53 residues: VILLLLTASAPSVDARPKTEDVPLSSFRDNTKSTLQRLLKRVNCCGIDESCCS.

An N-terminal signal peptide occupies residues 1–15 (VILLLLTASAPSVDA). Residues 16–41 (RPKTEDVPLSSFRDNTKSTLQRLLKR) constitute a propeptide that is removed on maturation.

It belongs to the conotoxin T superfamily. Contains 2 disulfide bonds that can be either 'C1-C3, C2-C4' or 'C1-C4, C2-C3', since these disulfide connectivities have been observed for conotoxins with cysteine framework V (for examples, see AC P0DQQ7 and AC P81755). Expressed by the venom duct.

The protein resides in the secreted. This chain is Conotoxin Vc5.3, found in Conus victoriae (Queen Victoria cone).